A 77-amino-acid polypeptide reads, in one-letter code: MKREILKHQLVPEHVILNESEAKRVLKELDAHPEQLPKIKTTDPVAKAIGAKRGDIVKIIRKSPTAEEFVTYRLVQD.

This sequence belongs to the archaeal Rpo5/eukaryotic RPB5 RNA polymerase subunit family. As to quaternary structure, part of the RNA polymerase complex.

It localises to the cytoplasm. It catalyses the reaction RNA(n) + a ribonucleoside 5'-triphosphate = RNA(n+1) + diphosphate. In terms of biological role, DNA-dependent RNA polymerase (RNAP) catalyzes the transcription of DNA into RNA using the four ribonucleoside triphosphates as substrates. The protein is DNA-directed RNA polymerase subunit Rpo5 of Methanothermobacter thermautotrophicus (strain ATCC 29096 / DSM 1053 / JCM 10044 / NBRC 100330 / Delta H) (Methanobacterium thermoautotrophicum).